The primary structure comprises 54 residues: Ovomucoid (54 aa).

Residues 4 to 54 (VDCSGYPTHACTLELKPLCGSDNQTYSNKCGFCNAVAQSNGTLTLSHFGKC) form the Kazal-like domain. 3 disulfides stabilise this stretch: C6/C36, C14/C33, and C22/C54. N43 is a glycosylation site (N-linked (GlcNAc...) asparagine).

It is found in the secreted. The chain is Ovomucoid from Leipoa ocellata (Malleefowl).